Consider the following 299-residue polypeptide: MTTANQPICPSPAKWPSPAKLNLFLYITGQRADGYHQLQTLFQFLDYGDQLTIEPRDDNQIRLLTPIAGVENEQNLIVRAAKMLQKHPGNTPVPRGADISIDKCLPMGGGLGGGSSNAATVLVALNLLWQCGLTDEQLADLGLTLGADVPVFVRGHAAFAEGIGEKLQPAEPVEKWYLVIHPGVNIPTPIIFSDPELKRNTPIRPLAALLSTPYANDCEPIARKRFREVEQALSWLLEYAPSRLTGTGACVFAEFDTESSARQVLSIAPEWLHGFVARGVNVSPLHRVRSGKIESSERR.

Residue Lys20 is part of the active site. 106–116 (PMGGGLGGGSS) lines the ATP pocket. Residue Asp148 is part of the active site.

It belongs to the GHMP kinase family. IspE subfamily. In terms of assembly, homodimer.

It catalyses the reaction 4-CDP-2-C-methyl-D-erythritol + ATP = 4-CDP-2-C-methyl-D-erythritol 2-phosphate + ADP + H(+). It functions in the pathway isoprenoid biosynthesis; isopentenyl diphosphate biosynthesis via DXP pathway; isopentenyl diphosphate from 1-deoxy-D-xylulose 5-phosphate: step 3/6. Functionally, catalyzes the phosphorylation of the position 2 hydroxy group of 4-diphosphocytidyl-2C-methyl-D-erythritol. In Yersinia pseudotuberculosis serotype O:1b (strain IP 31758), this protein is 4-diphosphocytidyl-2-C-methyl-D-erythritol kinase.